A 634-amino-acid chain; its full sequence is 1-deoxy-D-xylulose-5-phosphate synthase (634 aa).

Thiamine diphosphate-binding positions include H74 and 115-117 (AHS). D146 provides a ligand contact to Mg(2+). Thiamine diphosphate-binding positions include 147 to 148 (GA), N176, Y283, and E365. N176 provides a ligand contact to Mg(2+).

It belongs to the transketolase family. DXPS subfamily. In terms of assembly, homodimer. Requires Mg(2+) as cofactor. The cofactor is thiamine diphosphate.

The enzyme catalyses D-glyceraldehyde 3-phosphate + pyruvate + H(+) = 1-deoxy-D-xylulose 5-phosphate + CO2. It functions in the pathway metabolic intermediate biosynthesis; 1-deoxy-D-xylulose 5-phosphate biosynthesis; 1-deoxy-D-xylulose 5-phosphate from D-glyceraldehyde 3-phosphate and pyruvate: step 1/1. In terms of biological role, catalyzes the acyloin condensation reaction between C atoms 2 and 3 of pyruvate and glyceraldehyde 3-phosphate to yield 1-deoxy-D-xylulose-5-phosphate (DXP). The chain is 1-deoxy-D-xylulose-5-phosphate synthase from Burkholderia thailandensis (strain ATCC 700388 / DSM 13276 / CCUG 48851 / CIP 106301 / E264).